Reading from the N-terminus, the 840-residue chain is Leucine--tRNA ligase (840 aa).

Positions Pro44–His55 match the 'HIGH' region motif. Positions Lys617–Ser621 match the 'KMSKS' region motif. ATP is bound at residue Lys620.

Belongs to the class-I aminoacyl-tRNA synthetase family.

It is found in the cytoplasm. The catalysed reaction is tRNA(Leu) + L-leucine + ATP = L-leucyl-tRNA(Leu) + AMP + diphosphate. This Borreliella burgdorferi (strain ATCC 35210 / DSM 4680 / CIP 102532 / B31) (Borrelia burgdorferi) protein is Leucine--tRNA ligase.